A 100-amino-acid polypeptide reads, in one-letter code: Large ribosomal subunit protein bL21 (100 aa).

Belongs to the bacterial ribosomal protein bL21 family. As to quaternary structure, part of the 50S ribosomal subunit. Contacts protein L20.

In terms of biological role, this protein binds to 23S rRNA in the presence of protein L20. In Corynebacterium kroppenstedtii (strain DSM 44385 / JCM 11950 / CIP 105744 / CCUG 35717), this protein is Large ribosomal subunit protein bL21.